The primary structure comprises 382 residues: UDP-4-amino-4-deoxy-L-arabinose--oxoglutarate aminotransferase (382 aa).

Lys-182 carries the N6-(pyridoxal phosphate)lysine modification.

Belongs to the DegT/DnrJ/EryC1 family. ArnB subfamily. In terms of assembly, homodimer. It depends on pyridoxal 5'-phosphate as a cofactor.

It catalyses the reaction UDP-4-amino-4-deoxy-beta-L-arabinose + 2-oxoglutarate = UDP-beta-L-threo-pentopyranos-4-ulose + L-glutamate. The protein operates within nucleotide-sugar biosynthesis; UDP-4-deoxy-4-formamido-beta-L-arabinose biosynthesis; UDP-4-deoxy-4-formamido-beta-L-arabinose from UDP-alpha-D-glucuronate: step 2/3. It participates in bacterial outer membrane biogenesis; lipopolysaccharide biosynthesis. In terms of biological role, catalyzes the conversion of UDP-4-keto-arabinose (UDP-Ara4O) to UDP-4-amino-4-deoxy-L-arabinose (UDP-L-Ara4N). The modified arabinose is attached to lipid A and is required for resistance to polymyxin and cationic antimicrobial peptides. This chain is UDP-4-amino-4-deoxy-L-arabinose--oxoglutarate aminotransferase, found in Yersinia enterocolitica serotype O:8 / biotype 1B (strain NCTC 13174 / 8081).